The primary structure comprises 209 residues: ATP synthase subunit O, mitochondrial (209 aa).

It belongs to the ATPase delta chain family. In terms of assembly, F-type ATPases have 2 components, CF(1) - the catalytic core - and CF(0) - the membrane proton channel. CF(1) has five subunits: alpha(3), beta(3), gamma(1), delta(1), epsilon(1). CF(0) has three main subunits: a, b and c.

Its subcellular location is the mitochondrion. The protein localises to the mitochondrion inner membrane. Its function is as follows. Mitochondrial membrane ATP synthase (F(1)F(0) ATP synthase or Complex V) produces ATP from ADP in the presence of a proton gradient across the membrane which is generated by electron transport complexes of the respiratory chain. F-type ATPases consist of two structural domains, F(1) - containing the extramembraneous catalytic core and F(0) - containing the membrane proton channel, linked together by a central stalk and a peripheral stalk. During catalysis, ATP synthesis in the catalytic domain of F(1) is coupled via a rotary mechanism of the central stalk subunits to proton translocation. Part of the complex F(0) domain and the peripheric stalk, which acts as a stator to hold the catalytic alpha(3)beta(3) subcomplex and subunit a/ATP6 static relative to the rotary elements. The protein is ATP synthase subunit O, mitochondrial of Drosophila melanogaster (Fruit fly).